A 348-amino-acid chain; its full sequence is Flagellar P-ring protein (348 aa).

A signal peptide spans 1–16 (MRVLTIFLLFMTSIFA).

Belongs to the FlgI family. The basal body constitutes a major portion of the flagellar organelle and consists of four rings (L,P,S, and M) mounted on a central rod.

The protein localises to the periplasm. The protein resides in the bacterial flagellum basal body. Its function is as follows. Assembles around the rod to form the L-ring and probably protects the motor/basal body from shearing forces during rotation. The sequence is that of Flagellar P-ring protein from Campylobacter jejuni subsp. jejuni serotype O:23/36 (strain 81-176).